We begin with the raw amino-acid sequence, 152 residues long: Stigma-specific STIG1-like protein 1 (152 aa).

The signal sequence occupies residues 1 to 19; it reads MAFVKLLVSIAITTAITIA.

Belongs to the STIG1 family.

In Arabidopsis thaliana (Mouse-ear cress), this protein is Stigma-specific STIG1-like protein 1.